We begin with the raw amino-acid sequence, 733 residues long: ATP-dependent RNA helicase DBP7 (733 aa).

2 disordered regions span residues 1-92 and 119-139; these read MDED…SKMI and SSQL…SNAP. A compositionally biased stretch (polar residues) spans 17–30; that stretch reads SVSSGSNKRTTSKV. Residues 52-80 are compositionally biased toward basic and acidic residues; sequence QKKDRSATGKDDGKKHENDESNDSKKRPT. Residues 144–173 carry the Q motif motif; the sequence is STFEGLGINERLSKHLTETLRFKNPTKVQK. The Helicase ATP-binding domain occupies 177–372; that stretch reads PTMLSTERDL…SIILNNPEMI (196 aa). ATP is bound at residue 190-197; that stretch reads AQTGSGKT. The DEAD box signature appears at 304–307; that stretch reads DEGD. The 191-residue stretch at 406 to 596 folds into the Helicase C-terminal domain; sequence TLSAILKKIS…NYENYLKDGF (191 aa). Residues 687–714 are disordered; sequence KKLGKSVESNSGIQGASKKTKKEDPRKK.

This sequence belongs to the DEAD box helicase family. DDX31/DBP7 subfamily.

Its subcellular location is the nucleus. It localises to the nucleolus. It catalyses the reaction ATP + H2O = ADP + phosphate + H(+). ATP-binding RNA helicase involved in the biogenesis of 60S ribosomal subunits and is required for the normal formation of 25S and 5.8S rRNAs. The protein is ATP-dependent RNA helicase DBP7 (DPB7) of Scheffersomyces stipitis (strain ATCC 58785 / CBS 6054 / NBRC 10063 / NRRL Y-11545) (Yeast).